The primary structure comprises 277 residues: Large ribosomal subunit protein uL2c (277 aa).

Disordered stretches follow at residues 24-57 and 226-266; these read IVQS…RGGG and NAAD…HKYS.

The protein belongs to the universal ribosomal protein uL2 family. Part of the 50S ribosomal subunit.

It localises to the plastid. The protein localises to the chloroplast. This Zygnema circumcarinatum (Green alga) protein is Large ribosomal subunit protein uL2c (rpl2).